The following is a 23-amino-acid chain: Conolysin-Mt1 (23 aa).

Position 22 is a serine amide (Ser22).

As to expression, expressed by the venom duct.

It is found in the secreted. Functionally, this cytolytic peptide has ability to disrupt the integrity of cell membranes from both prokaryotes and eukaryotes. It permeabilizes both negatively charged prokaryotic (PE:PG) and zwitterionic eukaryotic (PC:cholesterol) model membranes. It has potent hemolytic activity on human erythrocytes and exhibits low antimicrobial activity against the Gram-negative bacterium E.coli (MIC&gt;50 uM) and the Gram-positive bacterium S.aureus (MIC=25-50 uM). Intracranial injection causes mice to shuffle backward until the encounter an obstacle, at which time the mouse jump into the air. The backward shuffle is reminiscent to the signature dance 'moonwalk' that gained widespread popularity after being performed by Michael Jackson. This chain is Conolysin-Mt1, found in Conus mustelinus (Weasel cone).